Here is a 300-residue protein sequence, read N- to C-terminus: Protoheme IX farnesyltransferase 1 (300 aa).

The next 8 helical transmembrane spans lie at 28–48 (VVAL…PGAV), 50–70 (VQPL…AAAY), 106–126 (AMAI…TAWL), 150–170 (IVVG…AITG), 176–196 (ALLL…ALAI), 222–242 (CIML…LVGM), 243–263 (CGPL…YKAW), and 280–300 (FSIY…YLWS).

Belongs to the UbiA prenyltransferase family. Protoheme IX farnesyltransferase subfamily.

The protein localises to the cell inner membrane. It carries out the reaction heme b + (2E,6E)-farnesyl diphosphate + H2O = Fe(II)-heme o + diphosphate. It participates in porphyrin-containing compound metabolism; heme O biosynthesis; heme O from protoheme: step 1/1. Its function is as follows. Converts heme B (protoheme IX) to heme O by substitution of the vinyl group on carbon 2 of heme B porphyrin ring with a hydroxyethyl farnesyl side group. The chain is Protoheme IX farnesyltransferase 1 from Shewanella loihica (strain ATCC BAA-1088 / PV-4).